Reading from the N-terminus, the 397-residue chain is E3 ubiquitin-protein ligase RNF149 (397 aa).

The N-terminal stretch at 1-20 (MLRWLCLYSALCALTHGSSA) is a signal peptide. The span at 39-49 (TNSSVTGSTES) shows a compositional bias: polar residues. The interval 39 to 60 (TNSSVTGSTESGRYGDSSPKES) is disordered. N-linked (GlcNAc...) asparagine glycans are attached at residues N40 and N140. The 88-residue stretch at 83 to 170 (YIVPGTSAAA…PKGMEIMEPL (88 aa)) folds into the PA domain. A helical transmembrane segment spans residues 196–216 (VVFVAIAFITMMIISLAWLIF). An N-linked (GlcNAc...) asparagine glycan is attached at N231. An RING-type; atypical zinc finger spans residues 264–305 (CAVCIENYKTKDLVRILPCKHIFHRLCIDPWLIEHRTCPMCK). A disordered region spans residues 341 to 397 (SITQEESRSEGNNLPSSSTGSSLQQSNSVKDDAGETTALLDDPGNDNAAATHTQDSH). Residues 351–368 (GNNLPSSSTGSSLQQSNS) are compositionally biased toward low complexity. The span at 388–397 (AAATHTQDSH) shows a compositional bias: polar residues.

The protein resides in the membrane. The catalysed reaction is S-ubiquitinyl-[E2 ubiquitin-conjugating enzyme]-L-cysteine + [acceptor protein]-L-lysine = [E2 ubiquitin-conjugating enzyme]-L-cysteine + N(6)-ubiquitinyl-[acceptor protein]-L-lysine.. It participates in protein modification; protein ubiquitination. In terms of biological role, E3 ubiquitin-protein ligase. Ubiquitinates BRAF, inducing its proteasomal degradation. The sequence is that of E3 ubiquitin-protein ligase RNF149 (rnf149) from Xenopus laevis (African clawed frog).